A 313-amino-acid chain; its full sequence is FAM172 family protein homolog Y75B8A.31 (313 aa).

The segment at 293-313 is disordered; that stretch reads VKSENSKESDDEAPKSKKICV. The segment covering 296-307 has biased composition (basic and acidic residues); sequence ENSKESDDEAPK.

It belongs to the FAM172 family.

This is FAM172 family protein homolog Y75B8A.31 from Caenorhabditis elegans.